The sequence spans 850 residues: MALPSSSLSSQIHTGATTQCIPHFHGSLNAGTSAGKRRSLYLRWGKGPSKIVACAGQDPFSVPTLVKREFPPGFWKDHVIESLMPSYKVAPSDEKRIETLITEIKNMFRSMGYGETNPSAYDTAWVARIPAVDGSEKPQFPETLEWILQNQLKDGSWGEEFYFLAYDRILATLACIITLTIWQTGDTQVQKGIEFFKTQAGKIEEEADSHRPSGFEIVFPAMLKEAKALGLALPYELPFIQQIIEKREAKLQRLPPDLLYALPTTLLYSLEGLQEIVDWEKIMKLQSKDGSFLSSPASTAAVFMRTGNKKCLEFLNFVLKKFGNHVPCHYPLDLFERLWAVDTVERLGIDHHFKEEIKDALDYVYSHWDERGIGWARENPVPDIDDTAMGLRILRLHGYNVSSDVLKTFRDENGEFFCFLGQTQRGVTDMLNVNRCSHVAFPGETIMEEAKLCTERYLRNALEDGGASDKWALKKNIRGEVEYALKYPWHRSMPRLEARSYIENYGPNDVWLGKTMYMMPNISNEKYLELAKLDFNRVQFFHRQELQDIRRWWNSSGFSQLGFTRERVAEIYFSPASFLFEPEFATCRAVYTKTSNFTVILDDLYDAHGTLDNLKLFSESVKRWDLSLVDQMPQDMKICFKGFYNTFNEIAEEGRKRQGRDVLSYIQKVWEVQLEAYTKEAEWSAVRYVPSYDEYIGNASVSIALGTVVLISALFTGEILTDDILSKIGRDSRFLYLMGLTGRLVNDTKTYQAERGQGEVASAVQCYMKDHPEISEEEALKHVYTIMDNALDELNREFVNNRDVPDTCRRLVFETARIMQLFYMDGDGLTLSHNMEIKEHVKNCLFQPVA.

The transit peptide at 1–52 (MALPSSSLSSQIHTGATTQCIPHFHGSLNAGTSAGKRRSLYLRWGKGPSKIV) directs the protein to the chloroplast. Substrate is bound at residue Lys-250. Positions 383 and 385 each coordinate Mg(2+). Residues 383-386 (DIDD) carry the DXDD motif motif. Lys-470 serves as a coordination point for substrate. Residues Asp-602, Asp-606, Asn-746, Thr-750, and Glu-754 each contribute to the Mg(2+) site. Positions 602-606 (DDLYD) match the DDXXD motif motif.

This sequence belongs to the terpene synthase family. Tpsd subfamily. Requires Mg(2+) as cofactor. Expressed in young tissues such as flushing buds and green bark tissues. Lower levels in mature needles and bark.

It is found in the plastid. The protein resides in the chloroplast. It carries out the reaction (2E,6E,10E)-geranylgeranyl diphosphate = (+)-copalyl diphosphate. The enzyme catalyses (+)-copalyl diphosphate = abieta-8(14),12-diene + diphosphate. It catalyses the reaction (+)-copalyl diphosphate = neoabietadiene + diphosphate. The protein operates within terpene metabolism; oleoresin biosynthesis. Involved in defensive oleoresin formation in conifers in response to insect attack or other injury. Involved in diterpene (C20) olefins biosynthesis. Bifunctional enzyme that catalyzes two sequential cyclizations of geranylgeranyl diphosphate (GGPP) to levopimaradiene. Levopimaradiene is the major products of the enzyme followed by abietadiene, neoabietadiene and palustradiene. No activity with geranyl diphosphate (GPP) or farnesyl diphosphate (FPP) as substrate. This is Bifunctional levopimaradiene synthase, chloroplastic (LPS) from Pinus taeda (Loblolly pine).